The chain runs to 385 residues: 8-amino-7-oxononanoate synthase (385 aa).

R21 contacts substrate. Residue G108–Y109 coordinates pyridoxal 5'-phosphate. Residue H133 coordinates substrate. S179, H207, and T233 together coordinate pyridoxal 5'-phosphate. N6-(pyridoxal phosphate)lysine is present on K236. Substrate is bound at residue T350.

This sequence belongs to the class-II pyridoxal-phosphate-dependent aminotransferase family. BioF subfamily. As to quaternary structure, homodimer. The cofactor is pyridoxal 5'-phosphate.

It carries out the reaction 6-carboxyhexanoyl-[ACP] + L-alanine + H(+) = (8S)-8-amino-7-oxononanoate + holo-[ACP] + CO2. It functions in the pathway cofactor biosynthesis; biotin biosynthesis. Functionally, catalyzes the decarboxylative condensation of pimeloyl-[acyl-carrier protein] and L-alanine to produce 8-amino-7-oxononanoate (AON), [acyl-carrier protein], and carbon dioxide. The chain is 8-amino-7-oxononanoate synthase from Pectobacterium atrosepticum (strain SCRI 1043 / ATCC BAA-672) (Erwinia carotovora subsp. atroseptica).